A 64-amino-acid polypeptide reads, in one-letter code: Large ribosomal subunit protein bL35 (64 aa).

This sequence belongs to the bacterial ribosomal protein bL35 family.

This is Large ribosomal subunit protein bL35 from Shewanella sediminis (strain HAW-EB3).